The chain runs to 106 residues: UPF0145 protein PP_2873 (106 aa).

This sequence belongs to the UPF0145 family.

The protein is UPF0145 protein PP_2873 of Pseudomonas putida (strain ATCC 47054 / DSM 6125 / CFBP 8728 / NCIMB 11950 / KT2440).